A 416-amino-acid chain; its full sequence is Gamma-glutamyl phosphate reductase (416 aa).

This sequence belongs to the gamma-glutamyl phosphate reductase family.

Its subcellular location is the cytoplasm. It carries out the reaction L-glutamate 5-semialdehyde + phosphate + NADP(+) = L-glutamyl 5-phosphate + NADPH + H(+). It functions in the pathway amino-acid biosynthesis; L-proline biosynthesis; L-glutamate 5-semialdehyde from L-glutamate: step 2/2. Its function is as follows. Catalyzes the NADPH-dependent reduction of L-glutamate 5-phosphate into L-glutamate 5-semialdehyde and phosphate. The product spontaneously undergoes cyclization to form 1-pyrroline-5-carboxylate. The protein is Gamma-glutamyl phosphate reductase of Streptococcus pyogenes serotype M6 (strain ATCC BAA-946 / MGAS10394).